The primary structure comprises 169 residues: Fumarase E (169 aa).

Belongs to the MtlR/FumE family.

The catalysed reaction is (S)-malate = fumarate + H2O. In vitro catalyzes the addition of water to fumarate, forming malate. Cannot catalyze the reverse reaction. Cannot use the cis-isomer maleate as substrate. The chain is Fumarase E from Escherichia coli (strain K12).